We begin with the raw amino-acid sequence, 175 residues long: Transcriptional repressor NrdR (175 aa).

A zinc finger lies at 3–34; it reads CPICQDTNSRVLESRSAESGKSIRRRRECMNC. Positions 49–139 constitute an ATP-cone domain; sequence ITIIKRDGKK…VYRKFQGIRD (91 aa).

This sequence belongs to the NrdR family. Requires Zn(2+) as cofactor.

Negatively regulates transcription of bacterial ribonucleotide reductase nrd genes and operons by binding to NrdR-boxes. In Trichodesmium erythraeum (strain IMS101), this protein is Transcriptional repressor NrdR.